We begin with the raw amino-acid sequence, 94 residues long: Small ribosomal subunit protein uS19 (94 aa).

It belongs to the universal ribosomal protein uS19 family.

In terms of biological role, protein S19 forms a complex with S13 that binds strongly to the 16S ribosomal RNA. The protein is Small ribosomal subunit protein uS19 of Pelotomaculum thermopropionicum (strain DSM 13744 / JCM 10971 / SI).